A 2009-amino-acid polypeptide reads, in one-letter code: Sodium channel protein type 1 subunit alpha (2009 aa).

The Cytoplasmic portion of the chain corresponds to M1–S128. Positions R28–G48 are enriched in basic and acidic residues. A disordered region spans residues R28–N60. One copy of the I repeat lies at I110 to Q454. A helical transmembrane segment spans residues L129 to T146. Over M147–D152 the chain is Extracellular. The chain crosses the membrane as a helical span at residues W153–G177. Residues F178–D188 lie on the Cytoplasmic side of the membrane. The helical transmembrane segment at P189–E205 threads the bilayer. The Extracellular segment spans residues F206–S213. N211 carries N-linked (GlcNAc...) asparagine glycosylation. Residues A214–T235 traverse the membrane as a helical segment. Topologically, residues I236–K245 are cytoplasmic. The helical transmembrane segment at K246–F269 threads the bilayer. Residues M270 to S369 lie on the Extracellular side of the membrane. Disulfide bonds link C277–C345 and C336–C351. N-linked (GlcNAc...) asparagine glycans are attached at residues N284, N295, N301, N306, and N338. The segment at residues W370–W384 is an intramembrane region (pore-forming). The Extracellular portion of the chain corresponds to E385 to K397. A helical transmembrane segment spans residues T398–A423. Residues M424–P768 lie on the Cytoplasmic side of the membrane. A disordered region spans residues Q455–I529. Residues E456–A466 show a composition bias toward low complexity. A Phosphoserine modification is found at S470. Over residues L479–K492 the composition is skewed to low complexity. The span at K495–Q506 shows a compositional bias: basic residues. A compositionally biased stretch (basic and acidic residues) spans F520–I529. A phosphoserine mark is found at S523, S525, S550, S551, S607, and S730. The tract at residues V584–R627 is disordered. Positions D593–S607 are enriched in basic and acidic residues. One copy of the II repeat lies at C750–G1022. The helical transmembrane segment at F769–M787 threads the bilayer. The Extracellular portion of the chain corresponds to E788–N797. The helical transmembrane segment at N798 to I820 threads the bilayer. Over A821–E830 the chain is Cytoplasmic. Residues G831–L849 form a helical membrane-spanning segment. Topologically, residues A850–G854 are extracellular. A helical membrane pass occupies residues L855 to P874. The Cytoplasmic segment spans residues T875–G891. The helical transmembrane segment at N892–F912 threads the bilayer. At G913–F938 the chain is on the extracellular side. The cysteines at positions 921 and 927 are disulfide-linked. Residues H939–W952 constitute an intramembrane region (pore-forming). Topologically, residues I953 to Q965 are extracellular. A disulfide bond links C959 and C968. The helical transmembrane segment at A966–L992 threads the bilayer. Topologically, residues S993–N1218 are cytoplasmic. The tract at residues T1129–V1163 is disordered. The stretch at R1200–L1514 is one III repeat. A helical membrane pass occupies residues W1219–F1237. Residues E1238–T1250 lie on the Extracellular side of the membrane. The helical transmembrane segment at M1251–Y1276 threads the bilayer. The Cytoplasmic portion of the chain corresponds to Q1277–T1278. A helical transmembrane segment spans residues Y1279–L1304. Residues G1305–K1313 lie on the Extracellular side of the membrane. Residues S1314–G1332 traverse the membrane as a helical segment. The Cytoplasmic segment spans residues M1333 to P1345. Residues S1346–F1369 form a helical membrane-spanning segment. Over A1370–F1415 the chain is Extracellular. The cysteines at positions 1376 and 1396 are disulfide-linked. N-linked (GlcNAc...) asparagine glycans are attached at residues N1378, N1392, and N1403. Positions D1416–G1433 form an intramembrane region, pore-forming. Topologically, residues W1434–L1457 are extracellular. A helical transmembrane segment spans residues Y1458–I1483. The Cytoplasmic segment spans residues D1484 to Q1541. S1516 is subject to Phosphoserine; by PKC. Residues I1523–Q1821 form an IV repeat. The helical transmembrane segment at V1542 to V1560 threads the bilayer. The Extracellular segment spans residues E1561–T1571. An S1-S2 loop of repeat IV region spans residues E1561–T1571. A helical transmembrane segment spans residues I1572–I1593. At S1594 to T1601 the chain is on the cytoplasmic side. The helical transmembrane segment at I1602 to E1623 threads the bilayer. The tract at residues M1619–R1636 is S3b-S4 loop of repeat IV. Residues L1624–R1636 lie on the Extracellular side of the membrane. The helical transmembrane segment at V1637 to G1655 threads the bilayer. Over I1656 to M1665 the chain is Cytoplasmic. Residues S1666–G1688 form a helical membrane-spanning segment. The Extracellular segment spans residues M1689–G1711. The pore-forming intramembrane region spans N1712 to W1726. Residues D1727–P1759 are Extracellular-facing. C1741 and C1756 are oxidised to a cystine. The helical transmembrane segment at S1760–N1788 threads the bilayer. At F1789–K2009 the chain is on the cytoplasmic side. One can recognise an IQ domain in the interval E1915 to K1944. Residues Y1986–K2009 form a disordered region. A compositionally biased stretch (basic and acidic residues) spans R1988–K2009.

This sequence belongs to the sodium channel (TC 1.A.1.10) family. Nav1.1/SCN1A subfamily. In terms of assembly, the Nav1.1 voltage-gated sodium channel consists of an ion-conducting alpha subunit SCN1A which is functional on its own regulated by one or more beta-1 (SCN1B), beta-2 (SCN2B), beta-3 (SCN3B) and beta-4 (SCN4B) subunits. SCN1B and SCN3B are non-covalently associated with SCN1A. SCN2B and SCN4B are disulfide-linked to SCN1A. SCN1B regulates both the expression at the plasma membrane and the voltage dependence of Nav1.1 inactivation. SCN3B and SCN4B reduce Nav1.1 conductance. Probably interacts with TMEM233; modulates the gating properties of NaV1.1. Interacts with FGF13; regulates the steady-state inactivation of Nav.1.1. Phosphorylation at Ser-1516 by PKC in a highly conserved cytoplasmic loop slows inactivation of the sodium channel and reduces peak sodium currents.

Its subcellular location is the cell membrane. It carries out the reaction Na(+)(in) = Na(+)(out). With respect to regulation, activated by the spider toxins Hm1a and Hm1b (H.maculata, AC P60992 and AC P0DOC5) eliciting acute pain and mechanical allodynia. Inhibited by the conotoxin GVIIJ. Inhibited by the spider beta/delta-theraphotoxin-Pre1a. In terms of biological role, pore-forming subunit of Nav1.1, a voltage-gated sodium (Nav) channel that directly mediates the depolarizing phase of action potentials in excitable membranes. Navs, also called VGSCs (voltage-gated sodium channels) or VDSCs (voltage-dependent sodium channels), operate by switching between closed and open conformations depending on the voltage difference across the membrane. In the open conformation they allow Na(+) ions to selectively pass through the pore, along their electrochemical gradient. The influx of Na(+) ions provokes membrane depolarization, initiating the propagation of electrical signals throughout cells and tissues. By regulating the excitability of neurons, ensures that they respond appropriately to synaptic inputs, maintaining the balance between excitation and inhibition in brain neural circuits. Nav1.1 plays a role in controlling the excitability and action potential propagation from somatosensory neurons, thereby contributing to the sensory perception of mechanically-induced pain. The polypeptide is Sodium channel protein type 1 subunit alpha (Homo sapiens (Human)).